The chain runs to 504 residues: Maturase K (504 aa).

The protein belongs to the intron maturase 2 family. MatK subfamily.

It is found in the plastid. It localises to the chloroplast. Functionally, usually encoded in the trnK tRNA gene intron. Probably assists in splicing its own and other chloroplast group II introns. This chain is Maturase K, found in Gossypium barbadense (Sea Island cotton).